We begin with the raw amino-acid sequence, 691 residues long: Elongation factor G (691 aa).

Positions E8 to V282 constitute a tr-type G domain. GTP contacts are provided by residues A17 to T24, D81 to H85, and N135 to D138.

The protein belongs to the TRAFAC class translation factor GTPase superfamily. Classic translation factor GTPase family. EF-G/EF-2 subfamily.

It is found in the cytoplasm. Its function is as follows. Catalyzes the GTP-dependent ribosomal translocation step during translation elongation. During this step, the ribosome changes from the pre-translocational (PRE) to the post-translocational (POST) state as the newly formed A-site-bound peptidyl-tRNA and P-site-bound deacylated tRNA move to the P and E sites, respectively. Catalyzes the coordinated movement of the two tRNA molecules, the mRNA and conformational changes in the ribosome. The sequence is that of Elongation factor G from Prochlorococcus marinus (strain NATL2A).